We begin with the raw amino-acid sequence, 705 residues long: Phycobiliprotein ApcE (705 aa).

A phycobilin-like 1 region spans residues 18-76 (QTVPGSTIVQAEQQDRFPQQGELRELSSYFQSGLKRLAIAEIITRNSDTIVSRAANRIF). The segment at 77–145 (VGGSPLAYIE…VRIPSGFRPI (69 aa)) is phycobilin-like loop. Positions 146–238 (NVARYGPRNM…YFDVLIREFE (93 aa)) are phycobilin-like 2. Residue cysteine 196 coordinates (2R,3E)-phycocyanobilin. 2 PBS-linker domains span residues 253–433 (DQQG…FVKV) and 514–691 (KIFK…SLRP). Positions 685–705 (VKASLRPAAGAQERRPEVGRR) are disordered. A compositionally biased stretch (basic and acidic residues) spans 696 to 705 (QERRPEVGRR).

This sequence belongs to the phycobilisome linker protein family. In terms of assembly, phycobilisomes of this organism are composed of a two cylinder core, from which six rods radiate. The core is mainly composed of allophycocyanin alpha and beta chains, and of three minor components: the allophycocyanin alpha-B chain, a 18.3 kDa polypeptide, and the anchor polypeptide L-CM. In terms of processing, contains one covalently linked bilin chromophore. This protein autochromophorylates.

The protein localises to the cellular thylakoid membrane. Its function is as follows. This protein is postulated to act both as terminal energy acceptor (by its phycobilin-like domains) and as a linker polypeptide (by its repeats and arms) that stabilizes the phycobilisome core architecture. Has intrinsic bilin lyase activity. This chain is Phycobiliprotein ApcE (apcE), found in Synechococcus sp. (strain ATCC 27144 / PCC 6301 / SAUG 1402/1) (Anacystis nidulans).